The chain runs to 107 residues: CLAVATA3/ESR (CLE)-related protein 13 (107 aa).

The signal sequence occupies residues 1–25 (MATTRVSHVLGFLLWISLLIFVSIG). A glycan (N-linked (GlcNAc...) asparagine) is linked at asparagine 29. Residues 79-107 (ALPAGGSEIDPRYGVEKRLVPSGPNPLHH) are disordered. Residues 87–97 (IDPRYGVEKRL) are compositionally biased toward basic and acidic residues. 2 positions are modified to hydroxyproline: proline 99 and proline 102. O-linked (Ara...) hydroxyproline glycosylation is present at proline 102.

It belongs to the CLV3/ESR signal peptide family. The O-glycosylation (arabinosylation) of the hydroxyproline Pro-102 enhances binding affinity of the CLE13p peptide for its receptor. As to expression, mostly expressed in seedlings, roots, flowers, stems and apex, and, to a lower extent, in leaves and siliques.

The protein resides in the secreted. It localises to the extracellular space. Functionally, extracellular signal peptide that regulates cell fate. Represses root apical meristem maintenance. Regulates the transition of protophloem cells from proliferation to differentiation, thus impinging on postembryonic growth capacity of the root meristem; this signaling pathway requires CRN and CLV2. The polypeptide is CLAVATA3/ESR (CLE)-related protein 13 (Arabidopsis thaliana (Mouse-ear cress)).